Here is a 327-residue protein sequence, read N- to C-terminus: Cobalamin biosynthesis protein CobD (327 aa).

4 helical membrane-spanning segments follow: residues 61–78, 80–102, 160–182, and 300–322; these read MWLT…GLVI, SILP…ILLA, GIVA…YKFI, and AALV…ASLV.

This sequence belongs to the CobD/CbiB family.

It localises to the cell membrane. The protein operates within cofactor biosynthesis; adenosylcobalamin biosynthesis. Functionally, converts cobyric acid to cobinamide by the addition of aminopropanol on the F carboxylic group. The polypeptide is Cobalamin biosynthesis protein CobD (Brucella melitensis biotype 1 (strain ATCC 23456 / CCUG 17765 / NCTC 10094 / 16M)).